The sequence spans 266 residues: Cytochrome c oxidase subunit 2 (266 aa).

Residues 1–43 are Mitochondrial intermembrane-facing; that stretch reads MTITNYINNQFTFLDMAEPWQLGFQDPATPVMEGIINFHHDLM. The helical transmembrane segment at 44–64 threads the bilayer; it reads FFLISIVVFVCWMLFRVITLF. The Mitochondrial matrix portion of the chain corresponds to 65 to 82; the sequence is DEKKNKIPATVVHGATIE. The helical transmembrane segment at 83–103 threads the bilayer; that stretch reads IIWTSIPALILLTVAVPSFAL. At 104-266 the chain is on the mitochondrial intermembrane side; sequence LYSMDEVIDP…NVXLIKFYGI (163 aa). Residues H186, C221, E223, C225, H229, and M232 each contribute to the Cu cation site. E223 contacts Mg(2+).

It belongs to the cytochrome c oxidase subunit 2 family. In terms of assembly, component of the cytochrome c oxidase (complex IV, CIV), a multisubunit enzyme composed of a catalytic core of 3 subunits and several supernumerary subunits. The complex exists as a monomer or a dimer and forms supercomplexes (SCs) in the inner mitochondrial membrane with ubiquinol-cytochrome c oxidoreductase (cytochrome b-c1 complex, complex III, CIII). Cu cation serves as cofactor.

Its subcellular location is the mitochondrion inner membrane. The catalysed reaction is 4 Fe(II)-[cytochrome c] + O2 + 8 H(+)(in) = 4 Fe(III)-[cytochrome c] + 2 H2O + 4 H(+)(out). Its function is as follows. Component of the cytochrome c oxidase, the last enzyme in the mitochondrial electron transport chain which drives oxidative phosphorylation. The respiratory chain contains 3 multisubunit complexes succinate dehydrogenase (complex II, CII), ubiquinol-cytochrome c oxidoreductase (cytochrome b-c1 complex, complex III, CIII) and cytochrome c oxidase (complex IV, CIV), that cooperate to transfer electrons derived from NADH and succinate to molecular oxygen, creating an electrochemical gradient over the inner membrane that drives transmembrane transport and the ATP synthase. Cytochrome c oxidase is the component of the respiratory chain that catalyzes the reduction of oxygen to water. Electrons originating from reduced cytochrome c in the intermembrane space (IMS) are transferred via the dinuclear copper A center (CU(A)) of subunit 2 and heme A of subunit 1 to the active site in subunit 1, a binuclear center (BNC) formed by heme A3 and copper B (CU(B)). The BNC reduces molecular oxygen to 2 water molecules using 4 electrons from cytochrome c in the IMS and 4 protons from the mitochondrial matrix. The protein is Cytochrome c oxidase subunit 2 (COX2) of Phytophthora megasperma (Potato pink rot fungus).